We begin with the raw amino-acid sequence, 246 residues long: METKSSQTSHPWLVLLIFATFAVSIFAVYSNFPEVSADEKVHLKYPRNLEDAKQLGRVLSKYKENNYSVVLCGVIVVYVFLQSFAIPGSIFLTILSGYLFPFYVAIVLVCSCSATGAAICYTISKLFGRSFVLQKFPERIAKWQDDLSKHRDDFLNYMIFLRVTPIVPNWLINIASPVLDVPLAPFFWGTFLGVAPPSFLYIQAGSTLEQLSHTSVAWSWSSIVLLTGSAILSLAPILLKKKLKSD.

6 helical membrane-spanning segments follow: residues Trp12–Phe32, Ser68–Gly88, Pro101–Ile123, Ile159–Leu179, Pro182–Ile202, and Ser219–Leu239.

Belongs to the TMEM41 family.

It localises to the membrane. The chain is Transmembrane protein 41 homolog (tag-175) from Caenorhabditis elegans.